Consider the following 407-residue polypeptide: MERAVKENHKPSNVKIFHPMTEGAKRIPVNQPQSTQFRPPGTAVSAQRILGPSNVPQRVLAQAQKPILSSQKPTTQIPLRPATQGHQSSKPQGPNENRNPQQTSHSSTPNVEKKGSTDQGKTSAVPKEEGKKKQWCLEDFEIGRPLGKGKFGNVYLARERESKFILALKVLFKSQLEKAGVEHQLRREVEIQSHLRHPNILRLYGYFHDASRVYLILDYAPGGELFRELQKCTRFDDQRSAMYIKQLAEALLYCHSKKVIHRDIKPENLLLGSNGELKIADFGWSVHAPSSRRTTLCGTLDYLPPEMIEGRMHDETVDLWSLGVLCYEFLVGKPPFETDTHQETYRRISKVEFQYPPYVSEEARDLVSKLLKHNPNHRLPLKGVLEHPWIIKNSQLKKKDEPLPGAQ.

Residues 1 to 10 (MERAVKENHK) are compositionally biased toward basic and acidic residues. The segment at 1 to 130 (MERAVKENHK…KTSAVPKEEG (130 aa)) is disordered. 2 stretches are compositionally biased toward polar residues: residues 67–77 (ILSSQKPTTQI) and 84–110 (QGHQ…STPN). Residues 140 to 390 (FEIGRPLGKG…LKGVLEHPWI (251 aa)) form the Protein kinase domain. ATP is bound by residues K150, K169, and 217–220 (LDYA). D263 serves as the catalytic Proton acceptor. Residue D281 coordinates ATP. The interval 287 to 300 (HAPSSRRTTLCGTL) is activation segment.

Belongs to the protein kinase superfamily. Ser/Thr protein kinase family. Aurora subfamily. Interacts with kif2c and kif11. Post-translationally, phosphorylated. Autophosphorylated on a serine residue. In terms of tissue distribution, highly expressed in ovary and testis.

The protein resides in the cytoplasm. Its subcellular location is the cytoskeleton. It localises to the spindle. The protein localises to the microtubule organizing center. It is found in the centrosome. The catalysed reaction is L-seryl-[protein] + ATP = O-phospho-L-seryl-[protein] + ADP + H(+). It carries out the reaction L-threonyl-[protein] + ATP = O-phospho-L-threonyl-[protein] + ADP + H(+). In terms of biological role, mitotic serine/threonine kinases that contributes to the regulation of cell cycle progression. Associates with the centrosome and the spindle microtubules during mitosis and plays a critical role in various mitotic events including the establishment of mitotic spindle, centrosome duplication, centrosome separation as well as maturation, chromosomal alignment, spindle assembly checkpoint, and cytokinesis. Phosphorylates numerous target proteins. Important for microtubule formation and/or stabilization. In Xenopus laevis (African clawed frog), this protein is Aurora kinase A-A (aurka-a).